We begin with the raw amino-acid sequence, 511 residues long: 2-isopropylmalate synthase (511 aa).

Residues 4–266 (IRIFDTTLRD…ETGIDLSQLY (263 aa)) form the Pyruvate carboxyltransferase domain. Asp13, His201, His203, and Asn237 together coordinate Mn(2+). The regulatory domain stretch occupies residues 391–511 (VLEKIRVVSG…IAANARAQKN (121 aa)).

The protein belongs to the alpha-IPM synthase/homocitrate synthase family. LeuA type 1 subfamily. Homodimer. Requires Mn(2+) as cofactor.

It localises to the cytoplasm. The enzyme catalyses 3-methyl-2-oxobutanoate + acetyl-CoA + H2O = (2S)-2-isopropylmalate + CoA + H(+). It participates in amino-acid biosynthesis; L-leucine biosynthesis; L-leucine from 3-methyl-2-oxobutanoate: step 1/4. In terms of biological role, catalyzes the condensation of the acetyl group of acetyl-CoA with 3-methyl-2-oxobutanoate (2-ketoisovalerate) to form 3-carboxy-3-hydroxy-4-methylpentanoate (2-isopropylmalate). The chain is 2-isopropylmalate synthase from Acetivibrio thermocellus (strain ATCC 27405 / DSM 1237 / JCM 9322 / NBRC 103400 / NCIMB 10682 / NRRL B-4536 / VPI 7372) (Clostridium thermocellum).